A 67-amino-acid polypeptide reads, in one-letter code: Large ribosomal subunit protein bL31 (67 aa).

Zn(2+)-binding residues include Cys-16, Cys-18, Cys-36, and Cys-39.

It belongs to the bacterial ribosomal protein bL31 family. Type A subfamily. As to quaternary structure, part of the 50S ribosomal subunit. Zn(2+) serves as cofactor.

Functionally, binds the 23S rRNA. In Treponema denticola (strain ATCC 35405 / DSM 14222 / CIP 103919 / JCM 8153 / KCTC 15104), this protein is Large ribosomal subunit protein bL31.